We begin with the raw amino-acid sequence, 161 residues long: MHLPPLEPPISDRYFASGEVTIAADVVIAPGVLLIAEADSRIEIASGVCIGLGSVIHARGGAIIIQAGALLAAGVLIVGQSIVGRQACLGASTTLVNTSIEAGGVTAPGSLLSAETPPTTATVSSSEPAGRSPQSSAIAHPTKVYGKEQFLRMRQSMFPDR.

The disordered stretch occupies residues 111-140; sequence LLSAETPPTTATVSSSEPAGRSPQSSAIAH. Polar residues predominate over residues 116–137; that stretch reads TPPTTATVSSSEPAGRSPQSSA. Positions 144-161 match the Encapsulation peptide motif; the sequence is VYGKEQFLRMRQSMFPDR.

It belongs to the CcmN family. In terms of assembly, interacts with CcmM via the N-terminus of CcmN. Interacts with CcmK2 via the 18 C-terminal residues.

It is found in the carboxysome. In terms of biological role, required for carboxysome formation; the N-terminus interacts with CcmM which itself binds RuBisCO (ribulose bisphosphate carboxylase, rbcL-rbcS), while the C-terminal 18 residues interact with carboxysome shell protein CcmK2. Required for growth in normal air. Functionally, beta-carboxysome assembly initiates when soluble RuBisCO is condensed into a liquid matrix in a pre-carboxysome by the RbcS-like domains of probably both CcmM58 and CcmM35. CcmN interacts with the N-terminus of CcmM58, and then recruits the CcmK2 major shell protein via CcmN's encapsulation peptide. Shell formation requires CcmK proteins and CcmO. CcmL caps the otherwise elongated carboxysome. Once fully encapsulated carboxysomes are formed, they migrate within the cell probably via interactions with the cytoskeleton. This is Carboxysome assembly protein CcmN from Synechococcus elongatus (strain ATCC 33912 / PCC 7942 / FACHB-805) (Anacystis nidulans R2).